The primary structure comprises 145 residues: Large ribosomal subunit protein uL11 (145 aa).

It belongs to the universal ribosomal protein uL11 family. In terms of assembly, part of the ribosomal stalk of the 50S ribosomal subunit. Interacts with L10 and the large rRNA to form the base of the stalk. L10 forms an elongated spine to which L12 dimers bind in a sequential fashion forming a multimeric L10(L12)X complex. In terms of processing, one or more lysine residues are methylated.

Functionally, forms part of the ribosomal stalk which helps the ribosome interact with GTP-bound translation factors. In Aquifex aeolicus (strain VF5), this protein is Large ribosomal subunit protein uL11.